A 272-amino-acid polypeptide reads, in one-letter code: Imidazole glycerol phosphate synthase subunit HisF (272 aa).

Active-site residues include D12 and D131.

It belongs to the HisA/HisF family. In terms of assembly, heterodimer of HisH and HisF.

It is found in the cytoplasm. It carries out the reaction 5-[(5-phospho-1-deoxy-D-ribulos-1-ylimino)methylamino]-1-(5-phospho-beta-D-ribosyl)imidazole-4-carboxamide + L-glutamine = D-erythro-1-(imidazol-4-yl)glycerol 3-phosphate + 5-amino-1-(5-phospho-beta-D-ribosyl)imidazole-4-carboxamide + L-glutamate + H(+). Its pathway is amino-acid biosynthesis; L-histidine biosynthesis; L-histidine from 5-phospho-alpha-D-ribose 1-diphosphate: step 5/9. Functionally, IGPS catalyzes the conversion of PRFAR and glutamine to IGP, AICAR and glutamate. The HisF subunit catalyzes the cyclization activity that produces IGP and AICAR from PRFAR using the ammonia provided by the HisH subunit. This Methanopyrus kandleri (strain AV19 / DSM 6324 / JCM 9639 / NBRC 100938) protein is Imidazole glycerol phosphate synthase subunit HisF.